Reading from the N-terminus, the 499-residue chain is Putative hydrolase YuaR (499 aa).

The first 26 residues, 1 to 26, serve as a signal peptide directing secretion; the sequence is MRVIMKPLRRTLVFFIFSVFLCGTVS. In terms of domain architecture, AB hydrolase-1 spans 94-393; sequence GSVIIISGGP…DAFPAVNFER (300 aa). S207 acts as the Nucleophile in catalysis. Residue D433 is part of the active site. The active-site Proton donor is H460.

It belongs to the peptidase S33 family.

This chain is Putative hydrolase YuaR (yuaR), found in Escherichia coli (strain K12).